The chain runs to 193 residues: Homeobox protein HD-12 (193 aa).

The segment at residues 123–185 is a DNA-binding region (homeobox; TALE-type); the sequence is SVIRRINFPK…NARRRILPFM (63 aa).

It belongs to the TALE/KNOX homeobox family.

The protein resides in the nucleus. In Encephalitozoon cuniculi (strain GB-M1) (Microsporidian parasite), this protein is Homeobox protein HD-12 (HD-12).